We begin with the raw amino-acid sequence, 150 residues long: Transcriptional repressor NrdR (150 aa).

The tract at residues 1 to 22 is disordered; the sequence is MKCPYCSAPDSRVVNSRPSDDG. A zinc finger lies at 3 to 34; that stretch reads CPYCSAPDSRVVNSRPSDDGASIRRRRECLRC. An ATP-cone domain is found at 49-136; it reads LMVLKRGGQR…VYRDFDSLER (88 aa).

The protein belongs to the NrdR family. It depends on Zn(2+) as a cofactor.

Functionally, negatively regulates transcription of bacterial ribonucleotide reductase nrd genes and operons by binding to NrdR-boxes. The protein is Transcriptional repressor NrdR of Deinococcus geothermalis (strain DSM 11300 / CIP 105573 / AG-3a).